Reading from the N-terminus, the 322-residue chain is Hapalindole dimethylallyltransferase (322 aa).

Dimethylallyl diphosphate contacts are provided by Arg46, Arg60, Lys115, Asn166, Tyr168, Arg221, Tyr225, and Lys275.

The protein belongs to the aromatic prenyltransferase family.

The catalysed reaction is hapalindole G + dimethylallyl diphosphate = ambiguine A + diphosphate. The enzyme catalyses hapalindole U + dimethylallyl diphosphate + H(+) = ambiguine H + diphosphate. With respect to regulation, activity is slightly increased in the presence of Mg(2+). In terms of biological role, prenyltransferase involved in the biosynthesis of ambiguines, a family of hapalindole-type alkaloids. Catalyzes the reverse prenylation of hapalindole G or U at the C2 position with dimethylallyl diphosphate (DMAPP) to generate ambiguine A or H, respectively. In addition, accepts hapalindole A, an epimer of hapalindole G, and catalyzes normal prenylation at its C2 position. This Fischerella ambigua (strain UTEX 1903) protein is Hapalindole dimethylallyltransferase.